The primary structure comprises 388 residues: Fetuin-B (388 aa).

The N-terminal stretch at 1–18 (MGLLRLLVLCTLAACCMA) is a signal peptide. 2 Cystatin fetuin-B-type domains span residues 28–141 (QRPL…YNCT) and 152–264 (TTCP…VTCE). The N-linked (GlcNAc...) asparagine glycan is linked to asparagine 40. 5 disulfides stabilise this stretch: cysteine 96–cysteine 107, cysteine 120–cysteine 140, cysteine 154–cysteine 157, cysteine 217–cysteine 224, and cysteine 237–cysteine 263. A glycan (N-linked (GlcNAc...) asparagine) is linked at asparagine 139. Disordered stretches follow at residues 270–343 (AQVP…PQGD) and 367–388 (KEQR…VLPP). Positions 279–300 (AVTQGPQKLPQKNTAPTSSPSV) are enriched in polar residues. 2 O-linked (GalNAc...) threonine glycosylation sites follow: threonine 292 and threonine 295. The residue at position 321 (serine 321) is a Phosphoserine. Basic and acidic residues predominate over residues 367 to 381 (KEQRSAECPGPEKEN).

This sequence belongs to the fetuin family. As to expression, liver, lung and tongue.

The protein resides in the secreted. Protease inhibitor required for egg fertilization. Required to prevent premature zona pellucida hardening before fertilization, probably by inhibiting the protease activity of ASTL, a protease that mediates the cleavage of ZP2 and triggers zona pellucida hardening. This is Fetuin-B (Fetub) from Mus musculus (Mouse).